We begin with the raw amino-acid sequence, 661 residues long: Meiotic coiled-coil protein 1 (661 aa).

Coiled-coil stretches lie at residues 38 to 78 (LDAL…IIEE), 100 to 121 (RAIYNTKKNEAKNMYKEIERLS), 143 to 184 (DIKL…LSIK), 304 to 320 (ELIQSMKQEIGNLEVDL), and 360 to 387 (LKRLQKDFQLLKAKLICALREWEEDNEK). Disordered regions lie at residues 410–446 (QNQENISSNDNSKSSPESSPPARKTTGKIENKKLRNI), 467–562 (LIDR…TPAS), and 573–592 (LSRTPPKGEFTNSLDDTPTQ). Positions 414-430 (NISSNDNSKSSPESSPP) are enriched in low complexity. Residues 436-445 (GKIENKKLRN) are compositionally biased toward basic and acidic residues. 3 stretches are compositionally biased toward polar residues: residues 472–481 (VNQSPDTRSV), 548–562 (HNSVKLTGSSTTPAS), and 582–592 (FTNSLDDTPTQ).

The protein is Meiotic coiled-coil protein 1 (mcp1) of Schizosaccharomyces pombe (strain 972 / ATCC 24843) (Fission yeast).